We begin with the raw amino-acid sequence, 213 residues long: ATP synthase peripheral stalk subunit OSCP, mitochondrial (213 aa).

The N-terminal 23 residues, 1 to 23 (MAALAVSGLSQQVRCFSTSVVRP), are a transit peptide targeting the mitochondrion. Positions 5 to 23 (AVSGLSQQVRCFSTSVVRP) match the SIFI-degron motif. N6-acetyllysine occurs at positions 54, 60, 70, and 73. Lys90 carries the N6-succinyllysine modification. Residues Lys100, Lys158, and Lys162 each carry the N6-acetyllysine; alternate modification. N6-succinyllysine; alternate occurs at positions 100, 158, and 162. N6-acetyllysine occurs at positions 172, 176, and 192. Lys199 is subject to N6-succinyllysine.

The protein belongs to the ATPase delta chain family. Component of the ATP synthase complex composed at least of ATP5F1A/subunit alpha, ATP5F1B/subunit beta, ATP5MC1/subunit c (homooctomer), MT-ATP6/subunit a, MT-ATP8/subunit 8, ATP5ME/subunit e, ATP5MF/subunit f, ATP5MG/subunit g, ATP5MK/subunit k, ATP5MJ/subunit j, ATP5F1C/subunit gamma, ATP5F1D/subunit delta, ATP5F1E/subunit epsilon, ATP5PF/subunit F6, ATP5PB/subunit b, ATP5PD/subunit d, ATP5PO/subunit OSCP. ATP synthase complex consists of a soluble F(1) head domain (subunits alpha(3) and beta(3)) - the catalytic core - and a membrane F(0) domain - the membrane proton channel (subunits c, a, 8, e, f, g, k and j). These two domains are linked by a central stalk (subunits gamma, delta, and epsilon) rotating inside the F1 region and a stationary peripheral stalk (subunits F6, b, d, and OSCP). Post-translationally, acetylation at Lys-162 decreases ATP production. Deacetylated by SIRT3. In response to mitochondrial stress, the precursor protein is ubiquitinated by the SIFI complex in the cytoplasm before mitochondrial import, leading to its degradation. Within the SIFI complex, UBR4 initiates ubiquitin chain that are further elongated or branched by KCMF1.

The protein resides in the mitochondrion. Its subcellular location is the mitochondrion inner membrane. Functionally, subunit OSCP, of the mitochondrial membrane ATP synthase complex (F(1)F(0) ATP synthase or Complex V) that produces ATP from ADP in the presence of a proton gradient across the membrane which is generated by electron transport complexes of the respiratory chain. ATP synthase complex consist of a soluble F(1) head domain - the catalytic core - and a membrane F(1) domain - the membrane proton channel. These two domains are linked by a central stalk rotating inside the F(1) region and a stationary peripheral stalk. During catalysis, ATP synthesis in the catalytic domain of F(1) is coupled via a rotary mechanism of the central stalk subunits to proton translocation. In vivo, can only synthesize ATP although its ATP hydrolase activity can be activated artificially in vitro. Part of the complex F(0) domain. Part of the complex F(0) domain and the peripheric stalk, which acts as a stator to hold the catalytic alpha(3)beta(3) subcomplex and subunit a/ATP6 static relative to the rotary elements. In Bos taurus (Bovine), this protein is ATP synthase peripheral stalk subunit OSCP, mitochondrial.